The chain runs to 274 residues: NAD-dependent protein deacetylase (274 aa).

Residues 1–274 form the Deacetylase sirtuin-type domain; it reads MDSRMSDLQA…CDEVLAEVVS (274 aa). Residues 26-46 and 104-107 each bind NAD(+); these read GAGCSTASGIPDYRDGQGQWK and QNVD. H122 serves as the catalytic Proton acceptor. The Zn(2+) site is built by C130, C133, C181, and C184. NAD(+)-binding positions include 221–223, 247–249, and C265; these read GSS and NLG.

It belongs to the sirtuin family. Class II subfamily. It depends on Zn(2+) as a cofactor.

The protein localises to the cytoplasm. It carries out the reaction N(6)-acetyl-L-lysyl-[protein] + NAD(+) + H2O = 2''-O-acetyl-ADP-D-ribose + nicotinamide + L-lysyl-[protein]. Functionally, NAD-dependent protein deacetylase which modulates the activities of several enzymes which are inactive in their acetylated form. In Bordetella bronchiseptica (strain ATCC BAA-588 / NCTC 13252 / RB50) (Alcaligenes bronchisepticus), this protein is NAD-dependent protein deacetylase.